Consider the following 209-residue polypeptide: Large ribosomal subunit protein bL25 (209 aa).

Disordered regions lie at residues methionine 1–serine 20 and leucine 190–serine 209. Basic and acidic residues predominate over residues lysine 8–serine 20. Over residues valine 192–serine 209 the composition is skewed to acidic residues.

Belongs to the bacterial ribosomal protein bL25 family. CTC subfamily. As to quaternary structure, part of the 50S ribosomal subunit; part of the 5S rRNA/L5/L18/L25 subcomplex. Contacts the 5S rRNA. Binds to the 5S rRNA independently of L5 and L18.

Its function is as follows. This is one of the proteins that binds to the 5S RNA in the ribosome where it forms part of the central protuberance. This Bartonella tribocorum (strain CIP 105476 / IBS 506) protein is Large ribosomal subunit protein bL25.